The chain runs to 289 residues: Ribonuclease HII (289 aa).

Residues 1-55 are disordered; that stretch reads MIRDQAKTPGRAKSAAAAKASPAAKGGGNEAAQSAAGKAAAKPAAKPATSKSGKG. Low complexity-rich tracts occupy residues 7 to 24 and 31 to 55; these read KTPGRAKSAAAAKASPAA and AAQSAAGKAAAKPAAKPATSKSGKG. Residues 76–264 form the RNase H type-2 domain; sequence WPVAGCDEAG…VVAARRKHQP (189 aa). The a divalent metal cation site is built by D82, E83, and D173.

It belongs to the RNase HII family. Requires Mn(2+) as cofactor. The cofactor is Mg(2+).

The protein resides in the cytoplasm. It catalyses the reaction Endonucleolytic cleavage to 5'-phosphomonoester.. Functionally, endonuclease that specifically degrades the RNA of RNA-DNA hybrids. The chain is Ribonuclease HII from Bradyrhizobium sp. (strain BTAi1 / ATCC BAA-1182).